The following is a 57-amino-acid chain: Ribosome modulation factor 1 (57 aa).

The segment covering 1 to 14 has biased composition (basic residues); the sequence is MKRQKRDRQSRAHT. Residues 1-24 are disordered; sequence MKRQKRDRQSRAHTRGYQAGISGR.

This sequence belongs to the ribosome modulation factor family.

It localises to the cytoplasm. During stationary phase, converts 70S ribosomes to an inactive dimeric form (100S ribosomes). In Colwellia psychrerythraea (strain 34H / ATCC BAA-681) (Vibrio psychroerythus), this protein is Ribosome modulation factor 1.